The following is a 261-amino-acid chain: uncharacterized protein (261 aa).

The Response regulatory domain maps to threonine 7–glutamine 122. 4-aspartylphosphate is present on aspartate 54. In terms of domain architecture, HTH LytTR-type spans leucine 157 to serine 261.

This is an uncharacterized protein from Vibrio cholerae serotype O1 (strain ATCC 39315 / El Tor Inaba N16961).